A 210-amino-acid polypeptide reads, in one-letter code: Quaternary-amine-specific corrinoid protein (210 aa).

A B12-binding N-terminal domain is found at 1–90 (MADWKNLTQA…VLGSGDTAVA (90 aa)). Positions 90–210 (AGTILIGTAH…GVKICQAWVG (121 aa)) constitute a B12-binding domain. Histidine 103 contacts methylcob(III)alamin.

It belongs to the methylamine corrinoid protein family. The proline betaine:THF methyl transfer system is composed of two methyltransferases, MtpB and MtqA, and the corrinoid protein MtqC. The L-carnitine:THF methyl transfer system is composed of two methyltransferases, MtcB and MtqA, and the corrinoid protein MtqC.

Involved in the degradation of the quaternary amines L-proline betaine and L-carnitine. Component of a corrinoid-dependent methyltransferase system that transfers a methyl group from L-proline betaine or L-carnitine to tetrahydrofolate (THF), forming methyl-THF, a key intermediate in the Wood-Ljungdahl acetogenesis pathway. Acts as a methyl group carrier between MtpB or MtcB, and MtqA. A methyl group from L-proline betaine or L-carnitine is first transferred to the corrinoid prosthetic group of MtqC by MtpB or MtcB, respectively, and then transferred from MtqC to THF by MtqA. This chain is Quaternary-amine-specific corrinoid protein, found in Eubacterium limosum.